A 52-amino-acid chain; its full sequence is Large ribosomal subunit protein eL39 (52 aa).

It belongs to the eukaryotic ribosomal protein eL39 family. In terms of assembly, interacts with YIH1.

The chain is Large ribosomal subunit protein eL39 (RPL39) from Encephalitozoon cuniculi (strain GB-M1) (Microsporidian parasite).